The following is a 340-amino-acid chain: Adenosine kinase (340 aa).

The active site involves D293.

This sequence belongs to the carbohydrate kinase PfkB family. In terms of assembly, monomer. Mg(2+) serves as cofactor.

It carries out the reaction adenosine + ATP = AMP + ADP + H(+). It participates in purine metabolism; AMP biosynthesis via salvage pathway; AMP from adenosine: step 1/1. Its function is as follows. ATP dependent phosphorylation of adenosine and other related nucleoside analogs to monophosphate derivatives. The protein is Adenosine kinase (adk) of Dictyostelium discoideum (Social amoeba).